The chain runs to 356 residues: Ubiquitin-conjugating enzyme E2 Z (356 aa).

Positions 1 to 16 (MAESPTEEAATATAGA) are enriched in low complexity. Residues 1 to 22 (MAESPTEEAATATAGAGAAGPG) form a disordered region. In terms of domain architecture, UBC core spans 101 to 255 (QCLLRIKRDI…IRHETIRVAV (155 aa)). Cys-190 functions as the Glycyl thioester intermediate in the catalytic mechanism. Residues 334 to 356 (NAEMDSDSSSSGTETDLHGSLRV) form a disordered region. Ser-339 is subject to Phosphoserine.

Belongs to the ubiquitin-conjugating enzyme family.

Its subcellular location is the cytoplasm. It is found in the nucleus. It carries out the reaction S-ubiquitinyl-[E1 ubiquitin-activating enzyme]-L-cysteine + [E2 ubiquitin-conjugating enzyme]-L-cysteine = [E1 ubiquitin-activating enzyme]-L-cysteine + S-ubiquitinyl-[E2 ubiquitin-conjugating enzyme]-L-cysteine.. It functions in the pathway protein modification; protein ubiquitination. Its function is as follows. Catalyzes the covalent attachment of ubiquitin to other proteins. Specific substrate for UBA6, not charged with ubiquitin by UBE1. May be involved in apoptosis regulation. This chain is Ubiquitin-conjugating enzyme E2 Z (Ube2z), found in Rattus norvegicus (Rat).